Reading from the N-terminus, the 87-residue chain is Large ribosomal subunit protein bL31B (87 aa).

This sequence belongs to the bacterial ribosomal protein bL31 family. Type B subfamily. In terms of assembly, part of the 50S ribosomal subunit.

This is Large ribosomal subunit protein bL31B from Burkholderia thailandensis (strain ATCC 700388 / DSM 13276 / CCUG 48851 / CIP 106301 / E264).